A 414-amino-acid chain; its full sequence is Histidinol dehydrogenase (414 aa).

The NAD(+) site is built by tyrosine 116, glutamine 177, and asparagine 200. Residues threonine 223, glutamine 245, and histidine 248 each coordinate substrate. Zn(2+) is bound by residues glutamine 245 and histidine 248. Catalysis depends on proton acceptor residues glutamate 313 and histidine 314. Substrate contacts are provided by histidine 314, aspartate 347, glutamate 401, and histidine 406. Aspartate 347 is a binding site for Zn(2+). Histidine 406 lines the Zn(2+) pocket.

It belongs to the histidinol dehydrogenase family. The cofactor is Zn(2+).

It carries out the reaction L-histidinol + 2 NAD(+) + H2O = L-histidine + 2 NADH + 3 H(+). It functions in the pathway amino-acid biosynthesis; L-histidine biosynthesis; L-histidine from 5-phospho-alpha-D-ribose 1-diphosphate: step 9/9. Functionally, catalyzes the sequential NAD-dependent oxidations of L-histidinol to L-histidinaldehyde and then to L-histidine. The polypeptide is Histidinol dehydrogenase (Staphylococcus epidermidis (strain ATCC 12228 / FDA PCI 1200)).